The primary structure comprises 310 residues: HTH-type transcriptional activator TtdR (310 aa).

In terms of domain architecture, HTH lysR-type spans 6–63; sequence PLAKDLQVLVEIVHSGSFSAAAATLGQTPAFVTKRIQILENTLATTLLNRSARGVALT. The H-T-H motif DNA-binding region spans 23-42; it reads FSAAAATLGQTPAFVTKRIQ.

This sequence belongs to the LysR transcriptional regulatory family.

Functionally, positive regulator required for L-tartrate-dependent anaerobic growth on glycerol. Induces expression of the ttdA-ttdB-ygjE operon. This chain is HTH-type transcriptional activator TtdR (ttdR), found in Escherichia coli O6:K15:H31 (strain 536 / UPEC).